Consider the following 702-residue polypeptide: MHWMLLVSLLLLLWLLVASPRLAWLKAGLLSLFLLLLSVWGLVDRLSGDGINAATLYHLRADMDGAGVSDFSGYIAVFVGMLLLSLSPLLLVRVRRFQRPRGGGAVFAGFVGMLLVGIAASPLYRDGKRLYYQLRPVDYATVVPEYQVPQQPLHKRKNIVWIYGESLERTYFDEQVFPGLMPNLRALATEAVDVRNLASTEGSGWTIAGMVASMCGVPLTTAPGDENSMDRMGMFLPEARCLGDYLKDQGYRNHYVGGADASFAGKGRFLSSHGFDVVHDVHHFHDQGVAPKHFSAWGVHDDVLLDDAWDTFQTLSRAGQPFMLTTLTMDTHHPAGHLPLACKGQQYDSALGDIGLLHAIKCSDRLIGELVARIRNSRYGKNTIIVIASDHLAMPNDLSDVLAKQKRENLLLFLGKDIAPQQVLTRAGSTLDSGATLLQLLEPGMRTLGFGRSLLARDAPPSASVAASRDSGKDYPRYLAYARTLWTGRSTRMLRINGNGDVVVGVQQVRPPVLLEYDKDTNLKTVYLENTSRQFDRTHSKGTLAYVDRCTAFEDGSADGHWCALVVDRHQSMKLYRDPDLTRGIAVDAPLEATQQGPRPRVRQPIMLTQAARKTDAGRYMLELYAKRRPTRAFWVEAVSSERKVVLAQQWVVPDAAGRIRMPVGLEHAVEDLEIRAWLDYTEDVSVDDLALVKDIPVADRS.

3 consecutive transmembrane segments (helical) span residues 2–22, 71–91, and 103–123; these read HWMLLVSLLLLLWLLVASPRL, FSGYIAVFVGMLLLSLSPLLL, and GGAVFAGFVGMLLVGIAASPL.

The protein belongs to the OpgB family.

The protein localises to the cell inner membrane. It carries out the reaction a phosphatidylglycerol + a membrane-derived-oligosaccharide D-glucose = a 1,2-diacyl-sn-glycerol + a membrane-derived-oligosaccharide 6-(glycerophospho)-D-glucose.. Its pathway is glycan metabolism; osmoregulated periplasmic glucan (OPG) biosynthesis. Functionally, transfers a phosphoglycerol residue from phosphatidylglycerol to the membrane-bound nascent glucan backbones. This is Phosphoglycerol transferase I from Xanthomonas euvesicatoria pv. vesicatoria (strain 85-10) (Xanthomonas campestris pv. vesicatoria).